Consider the following 230-residue polypeptide: Claudin-2 (230 aa).

The Cytoplasmic portion of the chain corresponds to 1 to 7 (MASLGLQ). A helical membrane pass occupies residues 8–28 (LVGYVLGLLGLLGTVIAMLLP). Residues 29–81 (SWRTSSYVGASIVTAVGFSKGLWMECATHSTGITQCDIYSTMLGLPADIQAAQ) lie on the Extracellular side of the membrane. C54 and C64 are disulfide-bonded. Residues 82-102 (AMMVTSSAMSSLACIVSVVGM) traverse the membrane as a helical segment. The Cytoplasmic portion of the chain corresponds to 103–116 (RCTVFFQESRAKDR). The chain crosses the membrane as a helical span at residues 117-137 (VAVVGGVFFILGGLLGFIPVA). The Extracellular portion of the chain corresponds to 138–162 (WNLHGILRDFYSPLVPDSMKFEIGE). Residues 163–183 (ALYLGIISSLFSLIAGIFLCF) form a helical membrane-spanning segment. The Cytoplasmic segment spans residues 184–230 (SCSPQGNRSNYYDAYQAQPLATRSSPRPGQAPKGKSEFNSYSLTGYV). The interval 205 to 230 (TRSSPRPGQAPKGKSEFNSYSLTGYV) is disordered. K218 is covalently cross-linked (Glycyl lysine isopeptide (Lys-Gly) (interchain with G-Cter in SUMO)). 2 positions are modified to phosphoserine: S219 and S223. Residues 220–230 (EFNSYSLTGYV) are compositionally biased toward polar residues. The interaction with TJP1, TJP2 and TJP3 stretch occupies residues 229 to 230 (YV).

It belongs to the claudin family. As to quaternary structure, can form homo- and heteropolymers with other claudins to mediate paracellular barrier and channel functions of tight junctions in response to physiological stimuli. Homopolymers interact with CLDN3, but not CLDN1, homopolymers. Directly interacts with TJP1/ZO-1, TJP2/ZO-2 and TJP3/ZO-3. In terms of processing, the disulfide bond is necessary for pore formation, but is not required for correct protein trafficking.

The protein resides in the cell junction. It is found in the tight junction. It localises to the cell membrane. It catalyses the reaction Na(+)(in) = Na(+)(out). It carries out the reaction K(+)(in) = K(+)(out). The catalysed reaction is Rb(+)(in) = Rb(+)(out). The enzyme catalyses Li(+)(in) = Li(+)(out). It catalyses the reaction Cs(+)(in) = Cs(+)(out). It carries out the reaction Ca(2+)(in) = Ca(2+)(out). The catalysed reaction is methylamine(out) = methylamine(in). The enzyme catalyses choline(out) = choline(in). It catalyses the reaction H2O(in) = H2O(out). Its function is as follows. Forms paracellular channels: polymerizes in tight junction strands with cation- and water-selective channels through the strands, conveying epithelial permeability in a process known as paracellular tight junction permeability. In intestinal epithelium, allows for sodium and water fluxes from the peritoneal side to the lumen of the intestine to regulate nutrient absorption and clear enteric pathogens as part of mucosal immune response. In kidney, allows passive sodium and calcium reabsorption across proximal tubules from the lumen back to the bloodstream. In the hepatobiliary tract, allows paracellular water and cation fluxes in the hepatic perivenous areas and biliary epithelium to generate bile flow and maintain osmotic gradients. This is Claudin-2 (CLDN2) from Bos taurus (Bovine).